Reading from the N-terminus, the 124-residue chain is Phosphoribosyl-AMP cyclohydrolase (124 aa).

D82 is a Mg(2+) binding site. A Zn(2+)-binding site is contributed by C83. The Mg(2+) site is built by D84 and D86. The Zn(2+) site is built by C99 and C106.

The protein belongs to the PRA-CH family. In terms of assembly, homodimer. Mg(2+) is required as a cofactor. Zn(2+) serves as cofactor.

It is found in the cytoplasm. The catalysed reaction is 1-(5-phospho-beta-D-ribosyl)-5'-AMP + H2O = 1-(5-phospho-beta-D-ribosyl)-5-[(5-phospho-beta-D-ribosylamino)methylideneamino]imidazole-4-carboxamide. The protein operates within amino-acid biosynthesis; L-histidine biosynthesis; L-histidine from 5-phospho-alpha-D-ribose 1-diphosphate: step 3/9. In terms of biological role, catalyzes the hydrolysis of the adenine ring of phosphoribosyl-AMP. This Rhizorhabdus wittichii (strain DSM 6014 / CCUG 31198 / JCM 15750 / NBRC 105917 / EY 4224 / RW1) (Sphingomonas wittichii) protein is Phosphoribosyl-AMP cyclohydrolase.